Consider the following 269-residue polypeptide: Phosphate import ATP-binding protein PstB 1 (269 aa).

The 242-residue stretch at L23–V264 folds into the ABC transporter domain. G55–S62 serves as a coordination point for ATP.

The protein belongs to the ABC transporter superfamily. Phosphate importer (TC 3.A.1.7) family. As to quaternary structure, the complex is composed of two ATP-binding proteins (PstB), two transmembrane proteins (PstC and PstA) and a solute-binding protein (PstS).

The protein resides in the cell membrane. It catalyses the reaction phosphate(out) + ATP + H2O = ADP + 2 phosphate(in) + H(+). Part of the ABC transporter complex PstSACB involved in phosphate import. Responsible for energy coupling to the transport system. This Latilactobacillus sakei subsp. sakei (strain 23K) (Lactobacillus sakei subsp. sakei) protein is Phosphate import ATP-binding protein PstB 1.